We begin with the raw amino-acid sequence, 91 residues long: MVAEVILPGRPTTLKADIREKIANFYNINPDTMAKNTPLSQDDKVAKTVEQRRKDAAAHKEAYNAMPEAERRHLNSEKYANRKAEVSYKHR.

Positions 51-91 (QRRKDAAAHKEAYNAMPEAERRHLNSEKYANRKAEVSYKHR) are disordered.

The protein belongs to the eukaryotic ribosomal protein eS24 family.

The polypeptide is Small ribosomal subunit protein eS24 (Caenorhabditis elegans).